Consider the following 215-residue polypeptide: 24 kDa Ras-like protein (215 aa).

Position 17–24 (Gly17–Ser24) interacts with GTP. An Effector region motif is present at residues Tyr39–Tyr47. GTP contacts are provided by residues Asp64–Gln68 and Asn123–Asp126. Residues Gln179–Asp199 are disordered. Cys212 carries the post-translational modification Cysteine methyl ester. A lipid anchor (S-farnesyl cysteine) is attached at Cys212. A propeptide spans Val213–Ala215 (removed in mature form).

It belongs to the small GTPase superfamily. Ras family.

It is found in the cell membrane. The enzyme catalyses GTP + H2O = GDP + phosphate + H(+). Functionally, ras proteins bind GDP/GTP and possess intrinsic GTPase activity. This chain is 24 kDa Ras-like protein (CC-RAS), found in Coprinopsis cinerea (strain Okayama-7 / 130 / ATCC MYA-4618 / FGSC 9003) (Inky cap fungus).